The sequence spans 205 residues: uncharacterized protein (205 aa).

This is an uncharacterized protein from Picosynechococcus sp. (strain ATCC 27264 / PCC 7002 / PR-6) (Agmenellum quadruplicatum).